The chain runs to 1451 residues: Copper-transporting ATPase 2 (1451 aa).

The Cytoplasmic portion of the chain corresponds to 1-646 (MPEQERKVTA…KTEIKQWKKS (646 aa)). HMA domains lie at 57–123 (TTGV…FEAS), 142–208 (AVVK…FEAA), and 256–322 (ATLP…PGYF). Cu(+) is bound by residues Cys68, Cys71, Cys153, Cys156, Cys267, and Cys270. Residues 328–353 (DGLEKESGSSSVPSLGSSQRQQEPGP) are disordered. Low complexity predominate over residues 335–345 (GSSSVPSLGSS). The HMA 4 domain maps to 355–421 (RTAVLTITGI…AVEDMGFEVS (67 aa)). Residues Ser469, Ser471, and Ser474 each carry the phosphoserine modification. 2 HMA domains span residues 481–547 (QKCF…FEAA) and 557–623 (GDIE…FHAS). Cu(+)-binding residues include Cys492, Cys495, Cys568, and Cys571. A helical membrane pass occupies residues 647–668 (FLCSLVFGIPVMGLMIYMLIPS). The Extracellular segment spans residues 669–690 (SKPHETMVLDHNIIPGLSVLNL). A helical transmembrane segment spans residues 691–710 (IFFILCTFVQFLGGWYFYVQ). Over 711 to 717 (AYKSLRH) the chain is Cytoplasmic. The helical transmembrane segment at 718 to 738 (KSANMDVLIVLATTIAYAYSL) threads the bilayer. Residues 739–757 (VILVVAIAEKAEKSPVTFF) lie on the Extracellular side of the membrane. Residues 758-778 (DTPPMLFVFIALGRWLEHVAK) form a helical membrane-spanning segment. The Cytoplasmic segment spans residues 779–912 (SKTSEALAKL…KAPIQQLADR (134 aa)). The chain crosses the membrane as a helical span at residues 913–935 (FSGYFVPFIIIISTLTLVVWIII). Topologically, residues 936-965 (GFVDFGIVQKYFPSPSKHISQTEVIIRFAF) are extracellular. Residues 966 to 987 (QTSITVLCIACPCSLGLATPTA) traverse the membrane as a helical segment. At 988–1310 (VMVGTGVAAQ…LSKRTVRRIR (323 aa)) the chain is on the cytoplasmic side. Asp1020 functions as the 4-aspartylphosphate intermediate in the catalytic mechanism. 2 residues coordinate Mg(2+): Asp1255 and Asp1259. The helical transmembrane segment at 1311-1328 (VNLVLALIYNMVGIPIAA) threads the bilayer. The Extracellular segment spans residues 1329-1339 (GVFMPIGIVLQ). The chain crosses the membrane as a helical span at residues 1340–1357 (PWMGSAAASSVSVVLSSL). Topologically, residues 1358–1451 (QLKCYRKPDL…LSDRDEEQCI (94 aa)) are cytoplasmic. 2 positions are modified to phosphoserine: Ser1384 and Ser1443.

The protein belongs to the cation transport ATPase (P-type) (TC 3.A.3) family. Type IB subfamily. As to quaternary structure, monomer. Interacts with COMMD1/MURR1. Interacts with DCTN4, in a copper-dependent manner. Interacts with ATOX1. Interacts (via C-terminus) with ZBTB16/PLZF. In terms of tissue distribution, expressed in brain, liver, kidney, spleen and stomach. In brain, detected in neuronal cells of the hippocampal formation, olfactory bulbs, cerebellum, cerebral cortex and nuclei in the brainstem. Isoform PINA is expressed during night in adult pineal gland (pinealocytes) and retina. Isoform PINA is not detected in other tissue.

It is found in the golgi apparatus. Its subcellular location is the trans-Golgi network membrane. It localises to the late endosome. It catalyses the reaction Cu(+)(in) + ATP + H2O = Cu(+)(out) + ADP + phosphate + H(+). Copper ion transmembrane transporter involved in the export of copper out of the cells, such as the efflux of hepatic copper into the bile. The sequence is that of Copper-transporting ATPase 2 (Atp7b) from Rattus norvegicus (Rat).